The chain runs to 191 residues: Probable DNA-directed RNA polymerase subunit delta (191 aa).

The HTH HARE-type domain occupies 14–83; the sequence is LSMIEVARAI…GDNKWGLRSW (70 aa). Composition is skewed to acidic residues over residues 119-133 and 143-191; these read EDAIDYNDDDPEDEN and YDND…ETND. The tract at residues 119–191 is disordered; sequence EDAIDYNDDD…DDDYEDETND (73 aa).

It belongs to the RpoE family. As to quaternary structure, RNAP is composed of a core of 2 alpha, a beta and a beta' subunits. The core is associated with a delta subunit and one of several sigma factors.

Its function is as follows. Participates in both the initiation and recycling phases of transcription. In the presence of the delta subunit, RNAP displays an increased specificity of transcription, a decreased affinity for nucleic acids, and an increased efficiency of RNA synthesis because of enhanced recycling. The protein is Probable DNA-directed RNA polymerase subunit delta of Streptococcus thermophilus (strain ATCC BAA-491 / LMD-9).